Consider the following 247-residue polypeptide: Uridylate kinase (247 aa).

Residue 18–21 participates in ATP binding; that stretch reads KLSG. Gly-60 is a binding site for UMP. Residues Gly-61 and Arg-65 each coordinate ATP. UMP contacts are provided by residues Asp-80 and 141-148; that span reads TGNPFFTT. ATP is bound by residues Thr-168, Tyr-174, and Asp-177.

This sequence belongs to the UMP kinase family. As to quaternary structure, homohexamer.

The protein resides in the cytoplasm. The enzyme catalyses UMP + ATP = UDP + ADP. The protein operates within pyrimidine metabolism; CTP biosynthesis via de novo pathway; UDP from UMP (UMPK route): step 1/1. Inhibited by UTP. Catalyzes the reversible phosphorylation of UMP to UDP. The chain is Uridylate kinase from Stutzerimonas stutzeri (strain A1501) (Pseudomonas stutzeri).